Here is a 491-residue protein sequence, read N- to C-terminus: MSRQEQTPLFSGVVAHAKHNPVQFHIPGHKKGAGMDPAFRSFIGDNALSIDLINIGPLDDLHHPHGIIKEAQELAAEAFGADHTFFSVQGTSGAIMTMIMSVVGPGEKIIVPRNVHKSIMSAIVFSGATPVFIHPEIDPLLGISHGITIEAVEKALDAHPDAKGLLVINPTYFGIAANLKKIVELCHSRDVPVLVDEAHGVHIHFHEALPLSAMQAGADMAATSVHKLGGSLTQSSILNVREGLVSAKRVQTIISMLTTTSTSYLLLASLDAARKHLATNGRDLIGYTIQLADQARDQINAIDGLYCVGKEILGTIATYDYDPTKLIISVKNLGITGYDAEVWLREHYQIEVELSDLYNILCIVSFGDTEREMDLLVKALSELADLHKHGICERSPVSVYVPNIPTLAMSPRDAFYAETEVVPFEDSVGRTIAEFIMVYPPGIPILIPGEIITESNLAYIRENNRAGLPVQGPEDDTFRTLRVIKEHEAIR.

K227 carries the N6-(pyridoxal phosphate)lysine modification.

It belongs to the Orn/Lys/Arg decarboxylase class-I family. Requires pyridoxal 5'-phosphate as cofactor.

It localises to the cytoplasm. It catalyses the reaction L-arginine + H(+) = agmatine + CO2. It functions in the pathway amine and polyamine biosynthesis; agmatine biosynthesis; agmatine from L-arginine: step 1/1. Its function is as follows. Catalyzes the formation of agmatine from arginine. This chain is Arginine decarboxylase (speA), found in Halalkalibacterium halodurans (strain ATCC BAA-125 / DSM 18197 / FERM 7344 / JCM 9153 / C-125) (Bacillus halodurans).